Reading from the N-terminus, the 359-residue chain is ELAV-like protein 2 (359 aa).

Residues 1–39 (METQLSNGPTCNNTANGPTTVNNNCSSPVDSGNTEDSKT) form a disordered region. RRM domains follow at residues 39 to 117 (TNLI…YARP) and 125 to 205 (ANLY…FANN). Phosphoserine is present on Ser221. Residues 276 to 354 (WCIFVYNLAP…RVLQVSFKTN (79 aa)) form the RRM 3 domain.

Belongs to the RRM elav family. In terms of assembly, interacts with IGF2BP1. Interacts with MAP1B light chain LC1.

In terms of biological role, RNA-binding protein that binds to the 3' untranslated region (3'UTR) of target mRNAs. Seems to recognize a GAAA motif. Can bind to its own 3'UTR, the FOS 3'UTR and the ID 3'UTR. The polypeptide is ELAV-like protein 2 (Elavl2) (Rattus norvegicus (Rat)).